A 202-amino-acid polypeptide reads, in one-letter code: dTTP/UTP pyrophosphatase (202 aa).

The active-site Proton acceptor is the Asp-76.

Belongs to the Maf family. YhdE subfamily. Requires a divalent metal cation as cofactor.

The protein localises to the cytoplasm. It catalyses the reaction dTTP + H2O = dTMP + diphosphate + H(+). It carries out the reaction UTP + H2O = UMP + diphosphate + H(+). Its function is as follows. Nucleoside triphosphate pyrophosphatase that hydrolyzes dTTP and UTP. May have a dual role in cell division arrest and in preventing the incorporation of modified nucleotides into cellular nucleic acids. This chain is dTTP/UTP pyrophosphatase, found in Neisseria gonorrhoeae (strain ATCC 700825 / FA 1090).